A 295-amino-acid polypeptide reads, in one-letter code: Cytidine deaminase (295 aa).

CMP/dCMP-type deaminase domains follow at residues 48–168 and 187–295; these read SDKE…FGPA and DDKD…FVNV. 89 to 91 contributes to the substrate binding site; sequence NME. Histidine 102 is a Zn(2+) binding site. The Proton donor role is filled by glutamate 104. Zn(2+) contacts are provided by cysteine 129 and cysteine 132.

It belongs to the cytidine and deoxycytidylate deaminase family. In terms of assembly, homodimer. Zn(2+) serves as cofactor.

The enzyme catalyses cytidine + H2O + H(+) = uridine + NH4(+). The catalysed reaction is 2'-deoxycytidine + H2O + H(+) = 2'-deoxyuridine + NH4(+). In terms of biological role, this enzyme scavenges exogenous and endogenous cytidine and 2'-deoxycytidine for UMP synthesis. This Vibrio parahaemolyticus serotype O3:K6 (strain RIMD 2210633) protein is Cytidine deaminase.